Here is a 286-residue protein sequence, read N- to C-terminus: Phosphatidylserine decarboxylase proenzyme (286 aa).

Active-site charge relay system; for autoendoproteolytic cleavage activity residues include D90, H147, and S252. The active-site Schiff-base intermediate with substrate; via pyruvic acid; for decarboxylase activity is the S252. S252 bears the Pyruvic acid (Ser); by autocatalysis mark.

Belongs to the phosphatidylserine decarboxylase family. PSD-B subfamily. Prokaryotic type I sub-subfamily. Heterodimer of a large membrane-associated beta subunit and a small pyruvoyl-containing alpha subunit. Pyruvate serves as cofactor. In terms of processing, is synthesized initially as an inactive proenzyme. Formation of the active enzyme involves a self-maturation process in which the active site pyruvoyl group is generated from an internal serine residue via an autocatalytic post-translational modification. Two non-identical subunits are generated from the proenzyme in this reaction, and the pyruvate is formed at the N-terminus of the alpha chain, which is derived from the carboxyl end of the proenzyme. The autoendoproteolytic cleavage occurs by a canonical serine protease mechanism, in which the side chain hydroxyl group of the serine supplies its oxygen atom to form the C-terminus of the beta chain, while the remainder of the serine residue undergoes an oxidative deamination to produce ammonia and the pyruvoyl prosthetic group on the alpha chain. During this reaction, the Ser that is part of the protease active site of the proenzyme becomes the pyruvoyl prosthetic group, which constitutes an essential element of the active site of the mature decarboxylase.

The protein resides in the cell membrane. It catalyses the reaction a 1,2-diacyl-sn-glycero-3-phospho-L-serine + H(+) = a 1,2-diacyl-sn-glycero-3-phosphoethanolamine + CO2. The protein operates within phospholipid metabolism; phosphatidylethanolamine biosynthesis; phosphatidylethanolamine from CDP-diacylglycerol: step 2/2. Its function is as follows. Catalyzes the formation of phosphatidylethanolamine (PtdEtn) from phosphatidylserine (PtdSer). This chain is Phosphatidylserine decarboxylase proenzyme, found in Azotobacter vinelandii (strain DJ / ATCC BAA-1303).